A 178-amino-acid chain; its full sequence is FXYD domain-containing ion transport regulator 5 (178 aa).

Residues 1 to 21 (MSPSGRLCLLTIVGLILPTRG) form the signal peptide. The Extracellular segment spans residues 22–145 (QTLKDTTSSS…FYDEHTLRKR (124 aa)). The interval 23 to 131 (TLKDTTSSSS…QTLKPSGFHE (109 aa)) is disordered. Low complexity-rich tracts occupy residues 26 to 36 (DTTSSSSADST) and 68 to 77 (TPQPQTQTQQ). Polar residues predominate over residues 103–125 (DTTTLSERPSPSTDVQTDPQTLK). The helical transmembrane segment at 146-164 (GLLVAAVLFITGIIILTSG) threads the bilayer. Topologically, residues 165–178 (KCRQLSRLCRNRCR) are cytoplasmic.

Belongs to the FXYD family. Regulatory subunit of the sodium/potassium-transporting ATPase which is composed of a catalytic alpha subunit, a non-catalytic beta subunit and an additional regulatory subunit. The regulatory subunit, a member of the FXYD protein family, modulates the enzymatic activity in a tissue- and isoform-specific way by changing affinities of the Na+/K+-ATPase toward Na(+), K(+) or ATP. Post-translationally, glycosylated.

Its subcellular location is the cell membrane. It localises to the basolateral cell membrane. Its function is as follows. Associates with and regulates the activity of the sodium/potassium-transporting ATPase (NKA) which catalyzes the hydrolysis of ATP coupled with the exchange of Na(+) and K(+) ions across the plasma membrane. May increase NKA activity by increasing the apparent affinity for Na(+). Involved in down-regulation of E-cadherin which results in reduced cell adhesion. Promotes metastasis. The sequence is that of FXYD domain-containing ion transport regulator 5 (FXYD5) from Homo sapiens (Human).